The following is a 129-amino-acid chain: Histone H2B.2 (129 aa).

Residues 1-19 show a composition bias toward basic and acidic residues; that stretch reads MAPKAEKKPASKAPAEKKP. Residues 1-38 are disordered; sequence MAPKAEKKPASKAPAEKKPAAKKTATSGTKKRSKTRKE. Residues lysine 7 and lysine 8 each carry the N6-acetyllysine; alternate modification. Residues lysine 7 and lysine 8 each participate in a glycyl lysine isopeptide (Lys-Gly) (interchain with G-Cter in SUMO); alternate cross-link. The residue at position 11 (serine 11) is a Phosphoserine. Lysine 12 is subject to N6-acetyllysine. Lysine 17 is subject to N6-acetyllysine; alternate. Residue lysine 17 forms a Glycyl lysine isopeptide (Lys-Gly) (interchain with G-Cter in SUMO); alternate linkage. Lysine 18 is covalently cross-linked (Glycyl lysine isopeptide (Lys-Gly) (interchain with G-Cter in SUMO)). Residue lysine 123 forms a Glycyl lysine isopeptide (Lys-Gly) (interchain with G-Cter in ubiquitin) linkage.

It belongs to the histone H2B family. In terms of assembly, the nucleosome is a histone octamer containing two molecules each of H2A, H2B, H3 and H4 assembled in one H3-H4 heterotetramer and two H2A-H2B heterodimers. The octamer wraps approximately 147 bp of DNA. Post-translationally, monoubiquitinated by the UBC2-BRE1 complex to form H2BK123ub1. H2BK123ub1 gives a specific tag for epigenetic transcriptional activation and is also prerequisite for H3K4me and H3K79me formation. H2BK123ub1 also modulates the formation of double-strand breaks during meiosis and is a prerequisite for DNA-damage checkpoint activation. In terms of processing, phosphorylated by STE20 to form H2BS10ph during progression through meiotic prophase. May be correlated with chromosome condensation. Acetylated by GCN5 to form H2BK11ac and H2BK16ac. H2BK16ac can also be formed by ESA1. Acetylation of N-terminal lysines and particularly formation of H2BK11acK16ac has a positive effect on transcription. Post-translationally, sumoylation to form H2BK6su or H2BK7su, and probably also H2BK16su or H2BK17su, occurs preferentially near the telomeres and represses gene transcription.

It localises to the nucleus. It is found in the chromosome. Core component of nucleosome. Nucleosomes wrap and compact DNA into chromatin, limiting DNA accessibility to the cellular machineries which require DNA as a template. Histones thereby play a central role in transcription regulation, DNA repair, DNA replication and chromosomal stability. DNA accessibility is regulated via a complex set of post-translational modifications of histones, also called histone code, and nucleosome remodeling. In Debaryomyces hansenii (strain ATCC 36239 / CBS 767 / BCRC 21394 / JCM 1990 / NBRC 0083 / IGC 2968) (Yeast), this protein is Histone H2B.2 (HTB2).